Here is a 302-residue protein sequence, read N- to C-terminus: Glycine--tRNA ligase alpha subunit (302 aa).

This sequence belongs to the class-II aminoacyl-tRNA synthetase family. Tetramer of two alpha and two beta subunits.

The protein resides in the cytoplasm. It carries out the reaction tRNA(Gly) + glycine + ATP = glycyl-tRNA(Gly) + AMP + diphosphate. This Haemophilus ducreyi (strain 35000HP / ATCC 700724) protein is Glycine--tRNA ligase alpha subunit.